The following is a 346-amino-acid chain: MIKAGILGSTGYAGAELVRLLTGHPEVEIQFLDSRSYHGKAYEEVYPSLKNIVKGKCASIDLENDFEGIDILFCALPHGLSQEAVKRMMAKGKRVIDLSADFRITDPKVYEAWYDVRHQALGELGKAVYGLSEIYPKEIQEAQLVANPGCYPTSIALALYPLLKENVISTESIIIDAKSGVSGAGRNLNDGTLFSQCNENIKAYSIGTHRHIPEIEQELSLAAGKEMIIQFTPHLVPMNRGILSTIYTTNIKNVKENDIEAIYAHYYEEKRFVRLLKEGKLPQTKAVSGSNYCDIGFKVDPRTNGLIVVSAIDNLVKGAAGQAVQNMNMMLGLKEYIGLEQMPIWP.

Cys-150 is an active-site residue.

Belongs to the NAGSA dehydrogenase family. Type 1 subfamily.

It is found in the cytoplasm. The catalysed reaction is N-acetyl-L-glutamate 5-semialdehyde + phosphate + NADP(+) = N-acetyl-L-glutamyl 5-phosphate + NADPH + H(+). The protein operates within amino-acid biosynthesis; L-arginine biosynthesis; N(2)-acetyl-L-ornithine from L-glutamate: step 3/4. Catalyzes the NADPH-dependent reduction of N-acetyl-5-glutamyl phosphate to yield N-acetyl-L-glutamate 5-semialdehyde. In Alkaliphilus metalliredigens (strain QYMF), this protein is N-acetyl-gamma-glutamyl-phosphate reductase.